Reading from the N-terminus, the 348-residue chain is VIP36-like protein (348 aa).

The N-terminal stretch at 1–38 is a signal peptide; the sequence is MAATLGPLGSWQQWRRCLLARDGSRMLLLLLLLGSGQG. Over 39–313 the chain is Lumenal; that stretch reads PQQVGAGQTF…APLPPLSGLA (275 aa). The L-type lectin-like domain maps to 49-274; that stretch reads EYLKREHSLS…DVISLKLFEL (226 aa). Positions 93 and 128 each coordinate a carbohydrate. Residues Asp159, Tyr161, and Asn163 each coordinate Ca(2+). Residue 161 to 163 participates in a carbohydrate binding; it reads YPN. Residue Asn181 is glycosylated (N-linked (GlcNAc...) asparagine). His188 provides a ligand contact to a carbohydrate. A Ca(2+)-binding site is contributed by Asp191. Cys200 and Cys237 are oxidised to a cystine. A carbohydrate is bound at residue 258-260; it reads GDL. A helical transmembrane segment spans residues 314–334; that stretch reads LFHIVFFSLVIFVFAIVIGII. Residues 335–348 lie on the Cytoplasmic side of the membrane; it reads LYNKWQEQSRKRFY. Positions 344 to 346 match the Endoplasmic reticulum retention signal motif; that stretch reads RKR.

The protein localises to the endoplasmic reticulum membrane. It localises to the golgi apparatus membrane. Functionally, may be involved in the regulation of export from the endoplasmic reticulum of a subset of glycoproteins. May function as a regulator of ERGIC-53. In Pongo abelii (Sumatran orangutan), this protein is VIP36-like protein (LMAN2L).